A 141-amino-acid chain; its full sequence is Large ribosomal subunit protein uL11 (141 aa).

Belongs to the universal ribosomal protein uL11 family. Part of the ribosomal stalk of the 50S ribosomal subunit. Interacts with L10 and the large rRNA to form the base of the stalk. L10 forms an elongated spine to which L12 dimers bind in a sequential fashion forming a multimeric L10(L12)X complex. One or more lysine residues are methylated.

Forms part of the ribosomal stalk which helps the ribosome interact with GTP-bound translation factors. The sequence is that of Large ribosomal subunit protein uL11 from Roseiflexus sp. (strain RS-1).